Consider the following 233-residue polypeptide: 5-demethoxyubiquinone hydroxylase, mitochondrial (233 aa).

Residues 1–15 constitute a mitochondrion transit peptide; that stretch reads MLSRVSVFKPASRGF. Residues serine 20 and serine 28 each carry the phosphoserine modification. A Phosphothreonine modification is found at threonine 32. Fe cation is bound by residues glutamate 63, glutamate 95, histidine 98, glutamate 147, glutamate 194, and histidine 197.

Belongs to the COQ7 family. In terms of assembly, component of a multi-subunit COQ enzyme complex, composed of at least COQ3, COQ4, COQ5, COQ6, COQ7 and COQ9. Fe cation serves as cofactor. Post-translationally, phosphorylated. Dephosphorylated by PTC7; dephosphorylation is essential for enzyme activation.

It localises to the mitochondrion inner membrane. The catalysed reaction is a 5-methoxy-2-methyl-3-(all-trans-polyprenyl)benzene-1,4-diol + AH2 + O2 = a 3-demethylubiquinol + A + H2O. It catalyses the reaction a 5-methoxy-2-methyl-3-(all-trans-polyprenyl)benzoquinone + NADH + O2 = a 3-demethylubiquinone + NAD(+) + H2O. It functions in the pathway cofactor biosynthesis; ubiquinone biosynthesis. With respect to regulation, dephosphorylation by PTC7 leads to activation. In terms of biological role, catalyzes the hydroxylation of 2-hexaprenyl-3-methyl-6-methoxy-1,4-benzoquinol (DMQH2) during ubiquinone biosynthesis. Also catalyzes the hydroxylation of the 5-methoxy-2-methyl-3-(all-trans-polyprenyl)benzoquinone at the C6 position and participates in the biosynthesis of ubiquinone. Also has a structural role in the COQ enzyme complex, stabilizing COQ3 and COQ4 polypeptides. This Saccharomyces cerevisiae (strain ATCC 204508 / S288c) (Baker's yeast) protein is 5-demethoxyubiquinone hydroxylase, mitochondrial.